The sequence spans 736 residues: MSEAPQARRVGSVDDHSVYDDAKTYYTSEERHNNSRSGPRQRTYSQNSLLGQMERLGLKEPFRRGSHDESNHNRRFLIQVDPTLESLKSQEDTDGNMQITIEDNGPKVLTLRTAGSNGHNRFDIRGTYMLSNLLQELTLAQEYGRKQVILDEARLNENPVNRLSRLIRDHFWDALTRRIDASSIEVAAKDPKDWTDDPRPRIYVPKGAPEQLEYYKKLAADKPDIRLDVVELPETITPEYVVGINKAPGLLAVDMEETVDPKTGERVMSGRPFVVPGGRFNELYGWDSYMESLGLLVNDKVYLAKSMVLNFCFCIKHYGKILNATRSYYLCRSQPPFLTDMALRVYDKIRHEPDATEFLRTAILAAIKEYHSVWVAEPRLDPVTGLSRYRPEGTGVPPETEADHFLHILEPYYKKHNMTFKEFVEAYNFGRIREPELDKYFLHDRAVRESGHDTSYRLEGVCADLATVDLNTLLFKYETDIARTIRNVFGDKLVIPAEYCVGSLQPGQVETSAIWDRRSKRRKLAIDKYLWNEEAGMYFDYDTAKRQQCNYESCTTFWALWAGVASPKQAAIMVTRALPKFEAYGGLLSGTEESRGQIGLDRPNRQWDYPYGWAPQQMLAWTGLYRYSFTEEAERLAYKWLFMITKAFSDFNGVVVEKYDVTRPVDPHRVDAEYGNQGLGFKGVAKEGFGWVNASYIYGLQIINAHMRRALGTLTPYDTFIKALEDNRNRALSEMV.

A disordered region spans residues 1 to 47 (MSEAPQARRVGSVDDHSVYDDAKTYYTSEERHNNSRSGPRQRTYSQN). Residues 11–33 (GSVDDHSVYDDAKTYYTSEERHN) show a composition bias toward basic and acidic residues. A compositionally biased stretch (polar residues) spans 35-47 (SRSGPRQRTYSQN). The Ca(2+) site is built by Asp-92, Asp-94, Asn-96, Gln-98, and Asp-103. Substrate-binding positions include Arg-279, 286–287 (WD), Asn-323, 332–334 (RSQ), Glu-399, Arg-448, and Gly-451. Residues Asp-453 and Glu-657 each act as proton donor/acceptor in the active site.

It belongs to the glycosyl hydrolase 37 family. It depends on Ca(2+) as a cofactor.

The protein localises to the cytoplasm. The enzyme catalyses alpha,alpha-trehalose + H2O = alpha-D-glucose + beta-D-glucose. The protein operates within carbohydrate degradation. Functionally, hydrolyzes intracellular trehalose to glucose. Plays a role in pathogenicity, specifically in proliferation of invasive hyphae in rice blast disease. This Pyricularia oryzae (strain 70-15 / ATCC MYA-4617 / FGSC 8958) (Rice blast fungus) protein is Cytosolic neutral trehalase (NTH1).